Reading from the N-terminus, the 426-residue chain is Serine--tRNA ligase (426 aa).

233-235 (TSE) serves as a coordination point for L-serine. 264 to 266 (RAE) provides a ligand contact to ATP. Position 287 (E287) interacts with L-serine. 351-354 (EISS) is an ATP binding site. S387 serves as a coordination point for L-serine.

Belongs to the class-II aminoacyl-tRNA synthetase family. Type-1 seryl-tRNA synthetase subfamily. Homodimer. The tRNA molecule binds across the dimer.

It is found in the cytoplasm. The catalysed reaction is tRNA(Ser) + L-serine + ATP = L-seryl-tRNA(Ser) + AMP + diphosphate + H(+). It catalyses the reaction tRNA(Sec) + L-serine + ATP = L-seryl-tRNA(Sec) + AMP + diphosphate + H(+). Its pathway is aminoacyl-tRNA biosynthesis; selenocysteinyl-tRNA(Sec) biosynthesis; L-seryl-tRNA(Sec) from L-serine and tRNA(Sec): step 1/1. Functionally, catalyzes the attachment of serine to tRNA(Ser). Is also able to aminoacylate tRNA(Sec) with serine, to form the misacylated tRNA L-seryl-tRNA(Sec), which will be further converted into selenocysteinyl-tRNA(Sec). The polypeptide is Serine--tRNA ligase (Xanthomonas campestris pv. campestris (strain 8004)).